We begin with the raw amino-acid sequence, 194 residues long: BCL2/adenovirus E1B 19 kDa protein-interacting protein 3 (194 aa).

The tract at residues 1–102 (MSQNGAPGMQ…SQSEEDDIER (102 aa)) is disordered. A compositionally biased stretch (basic and acidic residues) spans 42–55 (DMEKILLDAQHESG). Residues Ser54, Ser66, Ser86, Ser92, and Ser95 each carry the phosphoserine modification. The segment covering 56-69 (RSSSKSSHCDSPPR) has biased composition (low complexity). Over residues 78 to 88 (RASETDTHSIG) the composition is skewed to basic and acidic residues. A BH3 motif is present at residues 100-125 (IERRKEVESILKKNSDWIWDWSSRPE). Residues 164–184 (VFLPSLLLSHLLAIGLGIYIG) form a helical membrane-spanning segment.

Belongs to the NIP3 family. In terms of assembly, homodimer. Binds to BCL2. Interacts with BNIP3L and ACAA2. Interacts (via BH3 domain) with SPATA18 (via coiled-coil domains). Interacts with BOK; promotes BOK oligomerization. Interacts with PPTC7; this interaction promotes BNIP3 degradation. (Microbial infection) Interacts with adenovirus E1B 19 kDa protein. As to quaternary structure, (Microbial infection) Interacts with Epstein-Barr virus BHRF1.

Its subcellular location is the mitochondrion. It is found in the mitochondrion outer membrane. Apoptosis-inducing protein that can overcome BCL2 suppression. May play a role in repartitioning calcium between the two major intracellular calcium stores in association with BCL2. Involved in mitochondrial quality control via its interaction with SPATA18/MIEAP: in response to mitochondrial damage, participates in mitochondrial protein catabolic process (also named MALM) leading to the degradation of damaged proteins inside mitochondria. The physical interaction of SPATA18/MIEAP, BNIP3 and BNIP3L/NIX at the mitochondrial outer membrane regulates the opening of a pore in the mitochondrial double membrane in order to mediate the translocation of lysosomal proteins from the cytoplasm to the mitochondrial matrix. Plays an important role in the calprotectin (S100A8/A9)-induced cell death pathway. This Homo sapiens (Human) protein is BCL2/adenovirus E1B 19 kDa protein-interacting protein 3.